A 315-amino-acid polypeptide reads, in one-letter code: 4-diphosphocytidyl-2-C-methyl-D-erythritol kinase (315 aa).

K11 is an active-site residue. 99 to 109 contributes to the ATP binding site; that stretch reads PMAAGLAGGSA. Residue D141 is part of the active site.

This sequence belongs to the GHMP kinase family. IspE subfamily.

It carries out the reaction 4-CDP-2-C-methyl-D-erythritol + ATP = 4-CDP-2-C-methyl-D-erythritol 2-phosphate + ADP + H(+). Its pathway is isoprenoid biosynthesis; isopentenyl diphosphate biosynthesis via DXP pathway; isopentenyl diphosphate from 1-deoxy-D-xylulose 5-phosphate: step 3/6. Functionally, catalyzes the phosphorylation of the position 2 hydroxy group of 4-diphosphocytidyl-2C-methyl-D-erythritol. In Synechocystis sp. (strain ATCC 27184 / PCC 6803 / Kazusa), this protein is 4-diphosphocytidyl-2-C-methyl-D-erythritol kinase.